The chain runs to 207 residues: Large ribosomal subunit protein uL4 (207 aa).

The disordered stretch occupies residues 44 to 85 (MRQGTHKTKNRAEVSGGGRKPWRQKGTGRARQGSIRSPQWRG).

This sequence belongs to the universal ribosomal protein uL4 family. As to quaternary structure, part of the 50S ribosomal subunit.

Its function is as follows. One of the primary rRNA binding proteins, this protein initially binds near the 5'-end of the 23S rRNA. It is important during the early stages of 50S assembly. It makes multiple contacts with different domains of the 23S rRNA in the assembled 50S subunit and ribosome. In terms of biological role, forms part of the polypeptide exit tunnel. The protein is Large ribosomal subunit protein uL4 of Geobacillus thermodenitrificans (strain NG80-2).